The following is a 544-amino-acid chain: MSQQHTLPVTLPPALSQELLDTVPPPVNTQQEQRKQPAALPPPCQEVPVELPVEGPSKHEEKHMTIVKGAPEQECEQQQQPQEQKLQQQHWEQDEEHQKAENPEQQLKQEKAQREKQQLQGQLEEEKKLLDQQPDHELAKSDEQLGTKKEQLLEFPEQQEGQLKCLEQQEGHLELPEQQEGQLKCLEQQEGHQELPEQQEGQLKHLEQQEGQLKHLEQQEGQVKHLEQQEKQSELPEQQRGQPKYLEQQEGQLKHLEEQKGQLKHLEHQEGQLELPEQVGQPKHLEQLEKQLEHPEQQEGQLKQLEEQEGQVKHLEQQEEQLKHLEQQEGQPKHPEQLEKQLEHPEQQEGQLKQLEEQEGQVKHLEQQEEQLKHLEQQEGQPKHLEQLEKQLEHLEQQEGQLKHLEQREEQLELPEQQVGQSKHLEQEEKQLEHPEQQEGQLKHLGKQEAQLELPEQVGQPKHLEQQEKQLEHPEQQEGQLKPQEQQEGQLKGLEQQERQLEQPVFAPAPGQVQGIQQALPPKGEVLLPVEQQQQKQEVQWQHK.

A disordered region spans residues 1–520; that stretch reads MSQQHTLPVT…GQVQGIQQAL (520 aa). Positions 76–90 are enriched in low complexity; sequence EQQQQPQEQKLQQQH. Composition is skewed to basic and acidic residues over residues 96–117, 124–152, 202–234, 252–271, 283–297, 304–347, 354–411, 423–437, and 462–476; these read EHQK…REKQ, EEEK…KEQL, QLKH…KQSE, QLKH…HQEG, KHLE…HPEQ, QLEE…HPEQ, and QLEE…REEQ. The span at 477–494 shows a compositional bias: low complexity; it reads QEGQLKPQEQQEGQLKGL.

It belongs to the involucrin family. As to quaternary structure, directly or indirectly cross-linked to cornifelin (CNFN). Substrate of transglutaminase. Specific glutamines or lysines are cross-linked to keratins, desmoplakin and to inter involucrin molecules. As to expression, keratinocytes of epidermis and other stratified squamous epithelia.

It localises to the cytoplasm. Its function is as follows. Part of the insoluble cornified cell envelope (CE) of stratified squamous epithelia. In Aotus trivirgatus (Three-striped night monkey), this protein is Involucrin (IVL).